The primary structure comprises 404 residues: Probable ketol-acid reductoisomerase, mitochondrial (404 aa).

The 191-residue stretch at 63 to 253 (TKENVWERSD…AVGSGFIYQT (191 aa)) folds into the KARI N-terminal Rossmann domain. Residues 91–100 (GYGSQGHGQG), 115–120 (RKDGAS), and 153–157 (SDAAQ) each bind NADP(+). The active site involves His178. A KARI C-terminal knotted domain is found at 254-401 (TFKKEVISDL…EVVRSLRPEH (148 aa)). Ser261 is subject to Phosphoserine. Asp262, Glu266, Glu298, and Glu302 together coordinate Mg(2+). Position 324 (Ser324) interacts with substrate.

Belongs to the ketol-acid reductoisomerase family. It depends on Mg(2+) as a cofactor.

Its subcellular location is the mitochondrion. The enzyme catalyses (2R)-2,3-dihydroxy-3-methylbutanoate + NADP(+) = (2S)-2-acetolactate + NADPH + H(+). The catalysed reaction is (2R,3R)-2,3-dihydroxy-3-methylpentanoate + NADP(+) = (S)-2-ethyl-2-hydroxy-3-oxobutanoate + NADPH + H(+). It participates in amino-acid biosynthesis; L-isoleucine biosynthesis; L-isoleucine from 2-oxobutanoate: step 2/4. The protein operates within amino-acid biosynthesis; L-valine biosynthesis; L-valine from pyruvate: step 2/4. This is Probable ketol-acid reductoisomerase, mitochondrial (ilv5) from Schizosaccharomyces pombe (strain 972 / ATCC 24843) (Fission yeast).